A 126-amino-acid chain; its full sequence is MQSLGRHVLAEIYGCRFEVLNDVKKVEDIMVNAALEAGAEIREFVFHKFSPQGVSGVVVISESHLAIHTWPELGYAALDVFTCGDRVNPWDACNYVAEMFSAGDMKASEVKRGLMEQPEERLVANM.

The active-site Schiff-base intermediate with substrate; via pyruvic acid is the serine 63. Serine 63 carries the post-translational modification Pyruvic acid (Ser); by autocatalysis. Histidine 68 functions as the Proton acceptor; for processing activity in the catalytic mechanism. The active-site Proton donor; for catalytic activity is cysteine 83.

It belongs to the prokaryotic AdoMetDC family. Type 1 subfamily. As to quaternary structure, heterotetramer of two alpha and two beta chains arranged as a dimer of alpha/beta heterodimers. The cofactor is pyruvate. In terms of processing, is synthesized initially as an inactive proenzyme. Formation of the active enzyme involves a self-maturation process in which the active site pyruvoyl group is generated from an internal serine residue via an autocatalytic post-translational modification. Two non-identical subunits are generated from the proenzyme in this reaction, and the pyruvate is formed at the N-terminus of the alpha chain, which is derived from the carboxyl end of the proenzyme. The post-translation cleavage follows an unusual pathway, termed non-hydrolytic serinolysis, in which the side chain hydroxyl group of the serine supplies its oxygen atom to form the C-terminus of the beta chain, while the remainder of the serine residue undergoes an oxidative deamination to produce ammonia and the pyruvoyl group blocking the N-terminus of the alpha chain.

The enzyme catalyses S-adenosyl-L-methionine + H(+) = S-adenosyl 3-(methylsulfanyl)propylamine + CO2. It participates in amine and polyamine biosynthesis; S-adenosylmethioninamine biosynthesis; S-adenosylmethioninamine from S-adenosyl-L-methionine: step 1/1. Functionally, catalyzes the decarboxylation of S-adenosylmethionine to S-adenosylmethioninamine (dcAdoMet), the propylamine donor required for the synthesis of the polyamines spermine and spermidine from the diamine putrescine. The sequence is that of S-adenosylmethionine decarboxylase proenzyme from Syntrophomonas wolfei subsp. wolfei (strain DSM 2245B / Goettingen).